The chain runs to 528 residues: Sensory rhodopsin I transducer (528 aa).

The next 2 membrane-spanning stretches (helical) occupy residues 11–31 and 35–55; these read GAKL…VGVV and VAST…INAA. 2 consecutive HAMP domains span residues 55–107 and 142–195; these read AETV…DRLS and TAYQ…ETIE. The 242-residue stretch at 214–455 folds into the Methyl-accepting transducer domain; sequence TSRRVQQEVD…ATADSIADVT (242 aa). Glutamate methyl ester (Glu) is present on Glu259.

Belongs to the methyl-accepting chemotaxis (MCP) protein family. As to quaternary structure, interacts with Sop1.

The protein localises to the cell membrane. In terms of biological role, transduces signals from the phototaxis receptor sensory rhodopsin I (Sop1). The chain is Sensory rhodopsin I transducer (htr1) from Haloarcula marismortui (strain ATCC 43049 / DSM 3752 / JCM 8966 / VKM B-1809) (Halobacterium marismortui).